The following is a 70-amino-acid chain: Conotoxin Im23.3 (70 aa).

Positions 1–22 (MIMRMTLTLFVLVVMTAASASG) are cleaved as a signal peptide. The propeptide occupies 23-28 (DALTEA). 3 cysteine pairs are disulfide-bonded: Cys34/Cys41, Cys45/Cys53, and Cys54/Cys69.

It belongs to the conotoxin K superfamily. Expressed by the venom duct.

The protein localises to the secreted. Its function is as follows. Neurotoxin that induces excitatory symptoms in mice following intracranial administration. No symptoms are observed after intraperitoneal and intravenous (tail vein) injections. This Conus imperialis (Imperial cone) protein is Conotoxin Im23.3.